A 101-amino-acid polypeptide reads, in one-letter code: Aspartyl/glutamyl-tRNA(Asn/Gln) amidotransferase subunit C (101 aa).

This sequence belongs to the GatC family. In terms of assembly, heterotrimer of A, B and C subunits.

It catalyses the reaction L-glutamyl-tRNA(Gln) + L-glutamine + ATP + H2O = L-glutaminyl-tRNA(Gln) + L-glutamate + ADP + phosphate + H(+). The catalysed reaction is L-aspartyl-tRNA(Asn) + L-glutamine + ATP + H2O = L-asparaginyl-tRNA(Asn) + L-glutamate + ADP + phosphate + 2 H(+). Its function is as follows. Allows the formation of correctly charged Asn-tRNA(Asn) or Gln-tRNA(Gln) through the transamidation of misacylated Asp-tRNA(Asn) or Glu-tRNA(Gln) in organisms which lack either or both of asparaginyl-tRNA or glutaminyl-tRNA synthetases. The reaction takes place in the presence of glutamine and ATP through an activated phospho-Asp-tRNA(Asn) or phospho-Glu-tRNA(Gln). This chain is Aspartyl/glutamyl-tRNA(Asn/Gln) amidotransferase subunit C, found in Lactobacillus delbrueckii subsp. bulgaricus (strain ATCC 11842 / DSM 20081 / BCRC 10696 / JCM 1002 / NBRC 13953 / NCIMB 11778 / NCTC 12712 / WDCM 00102 / Lb 14).